A 626-amino-acid polypeptide reads, in one-letter code: Chaperone protein HtpG (626 aa).

The segment at 1-339 (MSTNQETRGF…SNDLPLNVSR (339 aa)) is a; substrate-binding. The interval 340–555 (EILQDNKVTA…NDQMTTQMAK (216 aa)) is b. The segment at 556-626 (LFAAAGQPVP…FIKRVNNLLG (71 aa)) is c.

This sequence belongs to the heat shock protein 90 family. As to quaternary structure, homodimer.

It is found in the cytoplasm. Functionally, molecular chaperone. Has ATPase activity. The polypeptide is Chaperone protein HtpG (Histophilus somni (strain 2336) (Haemophilus somnus)).